The sequence spans 211 residues: Small ribosomal subunit protein uS3 (211 aa).

Positions 38-106 (LRKFIKKAFY…NIELNIIEVK (69 aa)) constitute a KH type-2 domain.

This sequence belongs to the universal ribosomal protein uS3 family. Part of the 30S ribosomal subunit. Forms a tight complex with proteins S10 and S14.

In terms of biological role, binds the lower part of the 30S subunit head. Binds mRNA in the 70S ribosome, positioning it for translation. In Ehrlichia chaffeensis (strain ATCC CRL-10679 / Arkansas), this protein is Small ribosomal subunit protein uS3.